The sequence spans 305 residues: NAD-dependent protein deacylase sirtuin-5, mitochondrial (305 aa).

A mitochondrion-targeting transit peptide spans 1 to 32; it reads MIVRQLWCSRGSTSHLCAAVRLNWRSPKMTRP. One can recognise a Deacetylase sirtuin-type domain in the interval 33–303; that stretch reads SSDLTAFREH…PPALERHESE (271 aa). 54 to 73 contacts NAD(+); it reads GAGVSAESGVPTFRGPGGFW. Tyr-98 and Arg-101 together coordinate substrate. 136-139 provides a ligand contact to NAD(+); sequence QNID. The active-site Proton acceptor is His-154. Cys-162, Cys-165, Cys-203, and Cys-208 together coordinate Zn(2+). NAD(+) contacts are provided by residues 245 to 247, 271 to 273, and Cys-289; these read GTS and NME.

The protein belongs to the sirtuin family. Class III subfamily. Requires Zn(2+) as cofactor.

It is found in the mitochondrion. The protein localises to the cytoplasm. The protein resides in the cytosol. It localises to the nucleus. It catalyses the reaction N(6)-malonyl-L-lysyl-[protein] + NAD(+) + H2O = 2''-O-malonyl-ADP-D-ribose + nicotinamide + L-lysyl-[protein]. The enzyme catalyses N(6)-succinyl-L-lysyl-[protein] + NAD(+) + H2O = 2''-O-succinyl-ADP-D-ribose + nicotinamide + L-lysyl-[protein]. The catalysed reaction is N(6)-glutaryl-L-lysyl-[protein] + NAD(+) + H2O = 2''-O-glutaryl-ADP-D-ribose + nicotinamide + L-lysyl-[protein]. Its function is as follows. NAD-dependent lysine demalonylase, desuccinylase and deglutarylase that specifically removes malonyl, succinyl and glutaryl groups on target proteins. Has weak NAD-dependent protein deacetylase activity; however this activity may not be physiologically relevant in vivo. The protein is NAD-dependent protein deacylase sirtuin-5, mitochondrial (sirt5) of Danio rerio (Zebrafish).